The sequence spans 238 residues: MEILPAIDLKDGKAVRLTKGLMESAKIYSDEPWQVAKRFEEMGSRWLHLVDLNGAFAGEPKNLEQIKKIRANTSLKIELGGGIRDEETIRKYIDLGIERLILGSIAVKNPQFVKAMAAKYPIAVGIDAIDGFVAVEGWAKTSTMRATDLAREFAKSGVQAIICTDVGKDGTLSGVNVDFTVSIAEASGIDTIASGGVRDIEDIKKLQATGTVAGVIVGKAFYEGTLDLEEAFRLVQNG.

The active-site Proton acceptor is the D8. D127 serves as the catalytic Proton donor.

This sequence belongs to the HisA/HisF family.

It is found in the cytoplasm. It catalyses the reaction 1-(5-phospho-beta-D-ribosyl)-5-[(5-phospho-beta-D-ribosylamino)methylideneamino]imidazole-4-carboxamide = 5-[(5-phospho-1-deoxy-D-ribulos-1-ylimino)methylamino]-1-(5-phospho-beta-D-ribosyl)imidazole-4-carboxamide. It functions in the pathway amino-acid biosynthesis; L-histidine biosynthesis; L-histidine from 5-phospho-alpha-D-ribose 1-diphosphate: step 4/9. The protein is 1-(5-phosphoribosyl)-5-[(5-phosphoribosylamino)methylideneamino] imidazole-4-carboxamide isomerase of Nitratiruptor sp. (strain SB155-2).